The primary structure comprises 365 residues: GTPase Obg (365 aa).

The region spanning 1–159 is the Obg domain; the sequence is MKFIDEARIE…RMLKLELKVL (159 aa). An OBG-type G domain is found at 160–334; the sequence is ADVGLLGMPN…LIYAIKDHLQ (175 aa). GTP contacts are provided by residues 166–173, 191–195, 213–216, 284–287, and 315–317; these read GMPNAGKS, FTTLH, DIPG, NKLD, and SAL. The Mg(2+) site is built by Ser-173 and Thr-193.

Belongs to the TRAFAC class OBG-HflX-like GTPase superfamily. OBG GTPase family. As to quaternary structure, monomer. Requires Mg(2+) as cofactor.

Its subcellular location is the cytoplasm. In terms of biological role, an essential GTPase which binds GTP, GDP and possibly (p)ppGpp with moderate affinity, with high nucleotide exchange rates and a fairly low GTP hydrolysis rate. Plays a role in control of the cell cycle, stress response, ribosome biogenesis and in those bacteria that undergo differentiation, in morphogenesis control. In Cupriavidus necator (strain ATCC 17699 / DSM 428 / KCTC 22496 / NCIMB 10442 / H16 / Stanier 337) (Ralstonia eutropha), this protein is GTPase Obg.